The following is a 705-amino-acid chain: Variediene synthase (705 aa).

Residues L9 to C331 are terpene cyclase. D100 lines the Mg(2+) pocket. Residues D100, R186–D189, N230, S234–E238, and R325–Y326 contribute to the substrate site. The short motif at D100–E104 is the DDXXD 1 element. An NSE/DTE motif is present at residues N230–E238. The prenyltransferase stretch occupies residues K332 to V705. The span at G349–S366 shows a compositional bias: basic and acidic residues. Residues G349–T374 are disordered. Isopentenyl diphosphate-binding residues include K424, R427, and H456. Residues D463 and D467 each contribute to the Mg(2+) site. The DDXXD 2 motif lies at D463–D467. R472 lines the dimethylallyl diphosphate pocket. R473 is a binding site for isopentenyl diphosphate. Dimethylallyl diphosphate contacts are provided by K550, T551, Q589, N596, K605, and K615.

In the N-terminal section; belongs to the terpene synthase family. This sequence in the C-terminal section; belongs to the FPP/GGPP synthase family. In terms of assembly, hexamer. Mg(2+) is required as a cofactor.

The enzyme catalyses isopentenyl diphosphate + (2E,6E)-farnesyl diphosphate = (2E,6E,10E)-geranylgeranyl diphosphate + diphosphate. It carries out the reaction isopentenyl diphosphate + (2E,6E,10E)-geranylgeranyl diphosphate = (2E,6E,10E,14E)-geranylfarnesyl diphosphate + diphosphate. The catalysed reaction is (2E,6E,10E)-geranylgeranyl diphosphate = variediene + diphosphate. It catalyses the reaction (2E,6E,10E,14E)-geranylfarnesyl diphosphate = (R,2E)-alpha-cericerene + diphosphate. It functions in the pathway secondary metabolite biosynthesis; terpenoid biosynthesis. Its function is as follows. Bifunctional terpene synthase that converts dimethylallyl diphosphate (DMAPP) and isopentenyl diphosphate (IPP) into variediene as a single product. The C-terminal prenyltransferase (PT) domain of EvVS catalyzes formation of geranylgeranyl pyrophosphate (GGPP), whereas the N-terminal terpene cyclase (TC) domain catalyzes the cyclization of GGPP to variediene. The PT domain can also synthesize geranylfarnesyl pyrophosphate (GFPP) from the C5 isoprene units in vitro, while the TC domain is able to cyclize GFPP to the sesterterpene (2E)-alpha-cericerene. The polypeptide is Variediene synthase (Emericella variicolor (Aspergillus stellatus)).